Reading from the N-terminus, the 171-residue chain is 3-hydroxydecanoyl-[acyl-carrier-protein] dehydratase (171 aa).

Residue His-70 is part of the active site.

This sequence belongs to the thioester dehydratase family. FabA subfamily. In terms of assembly, homodimer.

Its subcellular location is the cytoplasm. The enzyme catalyses a (3R)-hydroxyacyl-[ACP] = a (2E)-enoyl-[ACP] + H2O. The catalysed reaction is (3R)-hydroxydecanoyl-[ACP] = (2E)-decenoyl-[ACP] + H2O. It catalyses the reaction (2E)-decenoyl-[ACP] = (3Z)-decenoyl-[ACP]. It functions in the pathway lipid metabolism; fatty acid biosynthesis. Necessary for the introduction of cis unsaturation into fatty acids. Catalyzes the dehydration of (3R)-3-hydroxydecanoyl-ACP to E-(2)-decenoyl-ACP and then its isomerization to Z-(3)-decenoyl-ACP. Can catalyze the dehydratase reaction for beta-hydroxyacyl-ACPs with saturated chain lengths up to 16:0, being most active on intermediate chain length. This is 3-hydroxydecanoyl-[acyl-carrier-protein] dehydratase from Marinomonas sp. (strain MWYL1).